Reading from the N-terminus, the 173-residue chain is Invasion protein B homolog BruAb1_0366 (173 aa).

The signal sequence occupies residues 1–23; the sequence is MKNYRAIGLAFTFTALSSLSAFA.

This sequence belongs to the IalB family.

This chain is Invasion protein B homolog BruAb1_0366, found in Brucella abortus biovar 1 (strain 9-941).